Consider the following 474-residue polypeptide: tRNA-2-methylthio-N(6)-dimethylallyladenosine synthase (474 aa).

The 118-residue stretch at 3-120 (KKLHIKTWGC…LPDMIEQVRR (118 aa)) folds into the MTTase N-terminal domain. The [4Fe-4S] cluster site is built by cysteine 12, cysteine 49, cysteine 83, cysteine 157, cysteine 161, and cysteine 164. Positions 143 to 375 (RAEGPTAFVS…QDRITQQAMR (233 aa)) constitute a Radical SAM core domain. Residues 378-441 (RHMMGTVQRI…TNSLRGKFIR (64 aa)) form the TRAM domain.

It belongs to the methylthiotransferase family. MiaB subfamily. Monomer. [4Fe-4S] cluster serves as cofactor.

The protein localises to the cytoplasm. The enzyme catalyses N(6)-dimethylallyladenosine(37) in tRNA + (sulfur carrier)-SH + AH2 + 2 S-adenosyl-L-methionine = 2-methylsulfanyl-N(6)-dimethylallyladenosine(37) in tRNA + (sulfur carrier)-H + 5'-deoxyadenosine + L-methionine + A + S-adenosyl-L-homocysteine + 2 H(+). Its function is as follows. Catalyzes the methylthiolation of N6-(dimethylallyl)adenosine (i(6)A), leading to the formation of 2-methylthio-N6-(dimethylallyl)adenosine (ms(2)i(6)A) at position 37 in tRNAs that read codons beginning with uridine. The chain is tRNA-2-methylthio-N(6)-dimethylallyladenosine synthase from Shewanella sp. (strain MR-7).